The chain runs to 130 residues: RNA silencing suppressor p14 (130 aa).

Functionally, acts as a suppressor of RNA-mediated gene silencing, also known as post-transcriptional gene silencing (PTGS), a mechanism of plant viral defense that limits the accumulation of viral RNAs. Binds to dsRNAs without size specificity. This chain is RNA silencing suppressor p14, found in Pothos latent virus (isolate Pigeonpea/India) (PoLV).